The primary structure comprises 187 residues: ATP-dependent protease subunit HslV (187 aa).

Thr13 is a catalytic residue. Na(+)-binding residues include Ala172, Cys175, and Thr178.

This sequence belongs to the peptidase T1B family. HslV subfamily. As to quaternary structure, a double ring-shaped homohexamer of HslV is capped on each side by a ring-shaped HslU homohexamer. The assembly of the HslU/HslV complex is dependent on binding of ATP.

The protein localises to the cytoplasm. The catalysed reaction is ATP-dependent cleavage of peptide bonds with broad specificity.. With respect to regulation, allosterically activated by HslU binding. In terms of biological role, protease subunit of a proteasome-like degradation complex believed to be a general protein degrading machinery. The sequence is that of ATP-dependent protease subunit HslV from Caulobacter sp. (strain K31).